Consider the following 212-residue polypeptide: Ribosomal RNA small subunit methyltransferase G (212 aa).

Residues Gly80, Leu85, 131–132 (AE), and Arg146 contribute to the S-adenosyl-L-methionine site.

This sequence belongs to the methyltransferase superfamily. RNA methyltransferase RsmG family.

The protein resides in the cytoplasm. The catalysed reaction is guanosine(527) in 16S rRNA + S-adenosyl-L-methionine = N(7)-methylguanosine(527) in 16S rRNA + S-adenosyl-L-homocysteine. In terms of biological role, specifically methylates the N7 position of guanine in position 527 of 16S rRNA. This chain is Ribosomal RNA small subunit methyltransferase G, found in Stenotrophomonas maltophilia (strain K279a).